Reading from the N-terminus, the 31-residue chain is Phalloidin proprotein (31 aa).

The propeptide occupies 1–10 (MSDINATRLP). A cross-link (cyclopeptide (Ala-Pro)) is located at residues 11-17 (AWLATCP). The 2'-cysteinyl-6'-hydroxytryptophan sulfoxide (Trp-Cys) cross-link spans 12 to 16 (WLATC). Positions 18 to 31 (CAGDDVNPLLTRGE) are excised as a propeptide.

The protein belongs to the MSDIN fungal toxin family. Processed by the macrocyclase-peptidase enzyme POPB to yield a toxic cyclic heptapeptide. POPB first removes 10 residues from the N-terminus. Conformational trapping of the remaining peptide forces the enzyme to release this intermediate rather than proceed to macrocyclization. The enzyme rebinds the remaining peptide in a different conformation and catalyzes macrocyclization of the N-terminal 7 residues.

In terms of biological role, major toxin that belongs to the bicyclic heptapeptides called phallotoxins. Although structurally related to amatoxins, phallotoxins have a different mode of action, which is the stabilization of F-actin. Phallotoxins are poisonous when administered parenterally, but not orally because of poor absorption. In Amanita ocreata (Western North American destroying angel), this protein is Phalloidin proprotein.